The following is a 360-amino-acid chain: Photosystem II protein D1 (360 aa).

3 helical membrane passes run tyrosine 29–serine 46, histidine 118–leucine 133, and tryptophan 142–alanine 156. Histidine 118 is a binding site for chlorophyll a. A pheophytin a-binding site is contributed by tyrosine 126. [CaMn4O5] cluster contacts are provided by aspartate 170 and glutamate 189. A helical transmembrane segment spans residues phenylalanine 197–leucine 218. Chlorophyll a is bound at residue histidine 198. Residues histidine 215 and serine 264–phenylalanine 265 each bind a quinone. Fe cation is bound at residue histidine 215. A Fe cation-binding site is contributed by histidine 272. A helical membrane pass occupies residues phenylalanine 274–methionine 288. [CaMn4O5] cluster is bound by residues histidine 332, glutamate 333, aspartate 342, and alanine 344. Positions serine 345–glycine 360 are excised as a propeptide.

Belongs to the reaction center PufL/M/PsbA/D family. In terms of assembly, PSII is composed of 1 copy each of membrane proteins PsbA, PsbB, PsbC, PsbD, PsbE, PsbF, PsbH, PsbI, PsbJ, PsbK, PsbL, PsbM, PsbT, PsbX, PsbY, PsbZ, Psb30/Ycf12, at least 3 peripheral proteins of the oxygen-evolving complex and a large number of cofactors. It forms dimeric complexes. The D1/D2 heterodimer binds P680, chlorophylls that are the primary electron donor of PSII, and subsequent electron acceptors. It shares a non-heme iron and each subunit binds pheophytin, quinone, additional chlorophylls, carotenoids and lipids. D1 provides most of the ligands for the Mn4-Ca-O5 cluster of the oxygen-evolving complex (OEC). There is also a Cl(-1) ion associated with D1 and D2, which is required for oxygen evolution. The PSII complex binds additional chlorophylls, carotenoids and specific lipids. serves as cofactor. Post-translationally, tyr-161 forms a radical intermediate that is referred to as redox-active TyrZ, YZ or Y-Z. In terms of processing, C-terminally processed by CTPA; processing is essential to allow assembly of the oxygen-evolving complex and thus photosynthetic growth.

Its subcellular location is the plastid. The protein localises to the chloroplast thylakoid membrane. It catalyses the reaction 2 a plastoquinone + 4 hnu + 2 H2O = 2 a plastoquinol + O2. Its function is as follows. Photosystem II (PSII) is a light-driven water:plastoquinone oxidoreductase that uses light energy to abstract electrons from H(2)O, generating O(2) and a proton gradient subsequently used for ATP formation. It consists of a core antenna complex that captures photons, and an electron transfer chain that converts photonic excitation into a charge separation. The D1/D2 (PsbA/PsbD) reaction center heterodimer binds P680, the primary electron donor of PSII as well as several subsequent electron acceptors. In Trieres chinensis (Marine centric diatom), this protein is Photosystem II protein D1.